The primary structure comprises 383 residues: uncharacterized protein (383 aa).

The protein belongs to the peptidase M20 family.

This is an uncharacterized protein from Staphylococcus haemolyticus (strain JCSC1435).